A 1049-amino-acid chain; its full sequence is Carbamoyl phosphate synthase large chain (1049 aa).

Residues 1-399 (MRESVRKVLV…SLQKAVRMLD (399 aa)) are carboxyphosphate synthetic domain. Residues arginine 127, arginine 167, glycine 173, glycine 174, lysine 206, leucine 208, glutamate 213, glycine 239, valine 240, histidine 241, glutamine 282, and glutamate 296 each contribute to the ATP site. Residues 131 to 325 (RETMINVGLP…LAYVSAKLAL (195 aa)) form the ATP-grasp 1 domain. Glutamine 282, glutamate 296, and asparagine 298 together coordinate Mg(2+). Positions 282, 296, and 298 each coordinate Mn(2+). Residues 400–548 (IGEPGVVGGK…LTYNGTEDDI (149 aa)) form an oligomerization domain region. Residues 549-930 (EFSEAGNKLL…LKSWLSSSPN (382 aa)) form a carbamoyl phosphate synthetic domain region. Positions 674–864 (SKLLDKLGIK…IISLALDGIL (191 aa)) constitute an ATP-grasp 2 domain. Residues arginine 710, lysine 749, leucine 751, glutamate 756, glycine 780, valine 781, histidine 782, serine 783, glutamine 823, and glutamate 835 each coordinate ATP. Residues glutamine 823, glutamate 835, and asparagine 837 each coordinate Mg(2+). The Mn(2+) site is built by glutamine 823, glutamate 835, and asparagine 837. Residues 930-1049 (NKIPNKEGIA…YEISEYGAGI (120 aa)) form the MGS-like domain. The interval 931–1049 (KIPNKEGIAL…YEISEYGAGI (119 aa)) is allosteric domain.

This sequence belongs to the CarB family. Composed of two chains; the small (or glutamine) chain promotes the hydrolysis of glutamine to ammonia, which is used by the large (or ammonia) chain to synthesize carbamoyl phosphate. Tetramer of heterodimers (alpha,beta)4. It depends on Mg(2+) as a cofactor. Requires Mn(2+) as cofactor.

It carries out the reaction hydrogencarbonate + L-glutamine + 2 ATP + H2O = carbamoyl phosphate + L-glutamate + 2 ADP + phosphate + 2 H(+). It catalyses the reaction hydrogencarbonate + NH4(+) + 2 ATP = carbamoyl phosphate + 2 ADP + phosphate + 2 H(+). It participates in amino-acid biosynthesis; L-arginine biosynthesis; carbamoyl phosphate from bicarbonate: step 1/1. Its pathway is pyrimidine metabolism; UMP biosynthesis via de novo pathway; (S)-dihydroorotate from bicarbonate: step 1/3. In terms of biological role, large subunit of the glutamine-dependent carbamoyl phosphate synthetase (CPSase). CPSase catalyzes the formation of carbamoyl phosphate from the ammonia moiety of glutamine, carbonate, and phosphate donated by ATP, constituting the first step of 2 biosynthetic pathways, one leading to arginine and/or urea and the other to pyrimidine nucleotides. The large subunit (synthetase) binds the substrates ammonia (free or transferred from glutamine from the small subunit), hydrogencarbonate and ATP and carries out an ATP-coupled ligase reaction, activating hydrogencarbonate by forming carboxy phosphate which reacts with ammonia to form carbamoyl phosphate. The polypeptide is Carbamoyl phosphate synthase large chain (Sulfurisphaera tokodaii (strain DSM 16993 / JCM 10545 / NBRC 100140 / 7) (Sulfolobus tokodaii)).